The primary structure comprises 1242 residues: Structural polyprotein (1242 aa).

Positions 14-101 (WRPRMPPRPW…PKRKPGRRER (88 aa)) are disordered. The segment covering 26–42 (RMPTMQRPDQQARQMQQ) has biased composition (low complexity). Positions 35-66 (QQARQMQQLIAAVSTLALRQNAAAPQRGKKKQ) are host transcription inhibition. The Nuclear localization signal signature appears at 59–96 (PQRGKKKQPRRKKPKPQPEKPKKQEQKPKQKKAPKRKP). The span at 61-73 (RGKKKQPRRKKPK) shows a compositional bias: basic residues. Residues 74–86 (PQPEKPKKQEQKP) show a composition bias toward basic and acidic residues. The tract at residues 82-111 (QEQKPKQKKAPKRKPGRRERMCMKIEHDCI) is binding to the viral RNA. Over residues 87-98 (KQKKAPKRKPGR) the composition is skewed to basic residues. Positions 96 to 110 (PGRRERMCMKIEHDC) are ribosome-binding. A disulfide bridge links cysteine 110 with cysteine 125. The region spanning 110–258 (CIFEVKHEGK…KITPEGTVEW (149 aa)) is the Peptidase S3 domain. Catalysis depends on histidine 136, which acts as the Charge relay system. The Nuclear export signal motif lies at 141–151 (IDNADLARLSY). The segment at 152 to 157 (KKSSKY) is interaction with spike glycoprotein E2. Aspartate 158 functions as the Charge relay system in the catalytic mechanism. The interval 180-190 (PEGHYNWHYGA) is dimerization of the capsid protein. Serine 210 serves as the catalytic Charge relay system. The interval 216–220 (DNKGP) is dimerization of the capsid protein. The segment at 259–272 (AASTVTAMCLLTNI) is functions as an uncleaved signal peptide for the precursor of protein E3/E2. 8 cysteine pairs are disulfide-bonded: cysteine 267–cysteine 276, cysteine 281–cysteine 285, cysteine 284–cysteine 316, cysteine 343–cysteine 449, cysteine 346–cysteine 352, cysteine 415–cysteine 429, cysteine 477–cysteine 589, and cysteine 527–cysteine 544. Asparagine 271 is a glycosylation site (N-linked (GlcNAc...) asparagine; by host). Over 325–690 (STANHFNAYK…YYYGLHPTTT (366 aa)) the chain is Extracellular. Interaction with host Mxra8 receptor stretches follow at residues 350-353 (HSCH) and 386-388 (HDH). Interaction with host Mxra8 receptor stretches follow at residues 508–511 (QSGN) and 540–546 (TINSCTV). N-linked (GlcNAc...) asparagine; by host glycosylation is present at asparagine 586. A helical membrane pass occupies residues 691–711 (IVVVIRVSVVVLLSFAASVYM). The Cytoplasmic segment spans residues 712–746 (CVVARTKCLTPYALTPGAVVPVTIGVLCCAPKAHA). Residues 714–718 (VARTK) form an interaction with the capsid protein region. 3 S-palmitoyl cysteine; by host lipidation sites follow: cysteine 719, cysteine 739, and cysteine 740. Residues 719–739 (CLTPYALTPGAVVPVTIGVLC) are transient transmembrane before p62-6K protein processing. A disulfide bond links cysteine 719 and cysteine 740. Topologically, residues 747-761 (ASFAEGMAYLWDNNQ) are extracellular. A glycan (N-linked (GlcNAc...) asparagine; by host) is linked at asparagine 760. Residues 762 to 782 (SMFWMELTGPLALLILATCCA) form a helical membrane-spanning segment. The Cytoplasmic segment spans residues 783–785 (RSL). Residues 786 to 806 (LSCCKGSFLVAMSIGSAVASA) traverse the membrane as a helical segment. Residues 807 to 1217 (YEHTAIIPNQ…STAMTWAQHL (411 aa)) are Extracellular-facing. 4 disulfides stabilise this stretch: cysteine 855/cysteine 920, cysteine 868/cysteine 900, cysteine 869/cysteine 902, and cysteine 874/cysteine 884. The tract at residues 890 to 907 (VYPFMWGGAYCFCDSENT) is E1 fusion peptide loop. Residues asparagine 947 and asparagine 1076 are each glycosylated (N-linked (GlcNAc...) asparagine; by host). 4 cysteine pairs are disulfide-bonded: cysteine 1065–cysteine 1077, cysteine 1107–cysteine 1180, cysteine 1112–cysteine 1184, and cysteine 1134–cysteine 1174. Residues 1218–1238 (AGGVGLLIALAVLILVIVTCV) traverse the membrane as a helical segment. A lipid anchor (S-palmitoyl cysteine; by host) is attached at cysteine 1237. Residues 1239–1242 (TLRR) are Cytoplasmic-facing.

Homodimer. Homomultimer. Interacts with host karyopherin KPNA4; this interaction allows the nuclear import of the viral capsid protein. Interacts with spike glycoprotein E2. Interacts with host IRAK1; the interaction leads to inhibition of IRAK1-dependent signaling. In terms of assembly, the precursor of protein E3/E2 and E1 form a heterodimer shortly after synthesis. As to quaternary structure, the precursor of protein E3/E2 and E1 form a heterodimer shortly after synthesis. Processing of the precursor of protein E3/E2 into E2 and E3 results in a heterodimer of the spike glycoproteins E2 and E1. Spike at virion surface are constituted of a trimer of E2-E1 heterodimers. After target cell attachment and endocytosis, E1 change conformation to form homotrimers. Interacts with 6K protein. Interacts with spike glycoprotein E1. Processing of the precursor of protein E3/E2 into E2 and E3 results in a heterodimer of the spike glycoproteins E2 and E1. Spike at virion surface are constituted of a trimer of E2-E1 heterodimers. Interacts with 6K protein. Interacts with host MXRA8; this interaction mediates virus entry. In terms of assembly, oligomer. Interacts with spike glycoprotein E1. Interacts with spike glycoprotein E2. In terms of processing, structural polyprotein: Specific enzymatic cleavages in vivo yield mature proteins. Capsid protein is auto-cleaved during polyprotein translation, unmasking a signal peptide at the N-terminus of the precursor of E3/E2. The remaining polyprotein is then targeted to the host endoplasmic reticulum, where host signal peptidase cleaves it into pE2, 6K and E1 proteins. pE2 is further processed to mature E3 and E2 by host furin in trans-Golgi vesicle. Post-translationally, palmitoylated via thioester bonds. These palmitoylations may induce disruption of the C-terminus transmembrane. This would result in the reorientation of E2 C-terminus from lumenal to cytoplasmic side. N-glycosylated. In terms of processing, palmitoylated via thioester bonds.

It localises to the virion. The protein resides in the host cytoplasm. The protein localises to the host cell membrane. It is found in the host nucleus. Its subcellular location is the virion membrane. It localises to the host Golgi apparatus. The protein resides in the host trans-Golgi network. The protein localises to the host endoplasmic reticulum. It carries out the reaction Autocatalytic release of the core protein from the N-terminus of the togavirus structural polyprotein by hydrolysis of a -Trp-|-Ser- bond.. In terms of biological role, forms an icosahedral capsid with a T=4 symmetry composed of 240 copies of the capsid protein surrounded by a lipid membrane through which penetrate 80 spikes composed of trimers of E1-E2 heterodimers. The capsid protein binds to the viral RNA genome at a site adjacent to a ribosome binding site for viral genome translation following genome release. Possesses a protease activity that results in its autocatalytic cleavage from the nascent structural protein. Following its self-cleavage, the capsid protein transiently associates with ribosomes, and within several minutes the protein binds to viral RNA and rapidly assembles into icosahedric core particles. The resulting nucleocapsid eventually associates with the cytoplasmic domain of the spike glycoprotein E2 at the cell membrane, leading to budding and formation of mature virions. In case of infection, new virions attach to target cells and after clathrin-mediated endocytosis their membrane fuses with the host endosomal membrane. This leads to the release of the nucleocapsid into the cytoplasm, followed by an uncoating event necessary for the genomic RNA to become accessible. The uncoating might be triggered by the interaction of capsid proteins with ribosomes. Binding of ribosomes would release the genomic RNA since the same region is genomic RNA-binding and ribosome-binding. Specifically inhibits interleukin-1 receptor-associated kinase 1/IRAK1-dependent signaling during viral entry, representing a means by which the alphaviruses may evade innate immune detection and activation prior to viral gene expression. Its function is as follows. Provides the signal sequence for the translocation of the precursor of protein E3/E2 to the host endoplasmic reticulum. Furin-cleaved E3 remains associated with spike glycoprotein E1 and mediates pH protection of the latter during the transport via the secretory pathway. After virion release from the host cell, the assembly protein E3 is gradually released in the extracellular space. Plays a role in viral attachment to target host cell, by binding to the cell receptor MXRA8. Synthesized as a p62 precursor which is processed by furin at the cell membrane just before virion budding, giving rise to E2-E1 heterodimer. The p62-E1 heterodimer is stable, whereas E2-E1 is unstable and dissociate at low pH. p62 is processed at the last step, presumably to avoid E1 fusion activation before its final export to cell surface. E2 C-terminus contains a transitory transmembrane that would be disrupted by palmitoylation, resulting in reorientation of the C-terminal tail from lumenal to cytoplasmic side. This step is critical since E2 C-terminus is involved in budding by interacting with capsid proteins. This release of E2 C-terminus in cytoplasm occurs lately in protein export, and precludes premature assembly of particles at the endoplasmic reticulum membrane. Functionally, acts as a viroporin that participates in virus glycoprotein processing and transport to the plasma membrane, cell permeabilization and budding of viral particles. Disrupts the calcium homeostasis of the cell, probably at the endoplasmic reticulum level. This leads to cytoplasmic calcium elevation. Because of its lipophilic properties, the 6K protein is postulated to influence the selection of lipids that interact with the transmembrane domains of the glycoproteins, which, in turn, affects the deformability of the bilayer required for the extreme curvature that occurs as budding proceeds. Present in low amount in virions, about 3% compared to viral glycoproteins. In terms of biological role, class II viral fusion protein. Fusion activity is inactive as long as E1 is bound to E2 in mature virion. After virus attachment to target cell via host MXRA8 and endocytosis, acidification of the endosome induce dissociation of E1/E2 heterodimer and concomitant trimerization of the E1 subunits. This E1 trimer is fusion active, and promotes release of viral nucleocapsid in cytoplasm after endosome and viral membrane fusion. Efficient fusion requires the presence of cholesterol and sphingolipid in the target membrane. This is Structural polyprotein from Mayaro virus (strain Brazil) (MAYV).